A 169-amino-acid chain; its full sequence is Large ribosomal subunit protein uL10 (169 aa).

This sequence belongs to the universal ribosomal protein uL10 family. As to quaternary structure, part of the ribosomal stalk of the 50S ribosomal subunit. The N-terminus interacts with L11 and the large rRNA to form the base of the stalk. The C-terminus forms an elongated spine to which L12 dimers bind in a sequential fashion forming a multimeric L10(L12)X complex.

Its function is as follows. Forms part of the ribosomal stalk, playing a central role in the interaction of the ribosome with GTP-bound translation factors. The sequence is that of Large ribosomal subunit protein uL10 from Rickettsia akari (strain Hartford).